A 179-amino-acid chain; its full sequence is Inner membrane-spanning protein YciB (179 aa).

5 helical membrane passes run 22 to 42, 50 to 70, 76 to 96, 121 to 141, and 149 to 169; these read IYAA…YSWV, MALI…FFHN, WKVT…QWVM, LAWA…AFWL, and FKVF…GVYI.

It belongs to the YciB family.

It is found in the cell inner membrane. Its function is as follows. Plays a role in cell envelope biogenesis, maintenance of cell envelope integrity and membrane homeostasis. The protein is Inner membrane-spanning protein YciB of Salmonella agona (strain SL483).